A 1402-amino-acid polypeptide reads, in one-letter code: DNA-directed RNA polymerase subunit beta' (1402 aa).

Zn(2+)-binding residues include Cys71, Cys73, Cys86, and Cys89. Mg(2+) contacts are provided by Asp462, Asp464, and Asp466. 4 residues coordinate Zn(2+): Cys811, Cys885, Cys892, and Cys895.

Belongs to the RNA polymerase beta' chain family. In terms of assembly, the RNAP catalytic core consists of 2 alpha, 1 beta, 1 beta' and 1 omega subunit. When a sigma factor is associated with the core the holoenzyme is formed, which can initiate transcription. Mg(2+) is required as a cofactor. Zn(2+) serves as cofactor.

The enzyme catalyses RNA(n) + a ribonucleoside 5'-triphosphate = RNA(n+1) + diphosphate. Its function is as follows. DNA-dependent RNA polymerase catalyzes the transcription of DNA into RNA using the four ribonucleoside triphosphates as substrates. The chain is DNA-directed RNA polymerase subunit beta' from Rhizobium johnstonii (strain DSM 114642 / LMG 32736 / 3841) (Rhizobium leguminosarum bv. viciae).